Consider the following 299-residue polypeptide: Sulfate adenylyltransferase subunit 2 (299 aa).

It belongs to the PAPS reductase family. CysD subfamily. Sulfate-activating enzymes, NodP and NodQ, may be physically associated.

The enzyme catalyses sulfate + ATP + H(+) = adenosine 5'-phosphosulfate + diphosphate. In terms of biological role, proposed to provide activated sulfate for transfer to nod factor. The protein is Sulfate adenylyltransferase subunit 2 (nodP) of Rhizobium sp. (strain BR816).